A 429-amino-acid chain; its full sequence is 3-phosphoshikimate 1-carboxyvinyltransferase (429 aa).

Residues lysine 23, serine 24, and arginine 28 each contribute to the 3-phosphoshikimate site. Lysine 23 contacts phosphoenolpyruvate. Phosphoenolpyruvate is bound by residues glycine 95 and arginine 123. 3-phosphoshikimate-binding residues include serine 168, glutamine 170, aspartate 316, and lysine 343. Position 170 (glutamine 170) interacts with phosphoenolpyruvate. Catalysis depends on aspartate 316, which acts as the Proton acceptor. Positions 347 and 389 each coordinate phosphoenolpyruvate.

Belongs to the EPSP synthase family. Monomer.

The protein resides in the cytoplasm. It catalyses the reaction 3-phosphoshikimate + phosphoenolpyruvate = 5-O-(1-carboxyvinyl)-3-phosphoshikimate + phosphate. The protein operates within metabolic intermediate biosynthesis; chorismate biosynthesis; chorismate from D-erythrose 4-phosphate and phosphoenolpyruvate: step 6/7. Catalyzes the transfer of the enolpyruvyl moiety of phosphoenolpyruvate (PEP) to the 5-hydroxyl of shikimate-3-phosphate (S3P) to produce enolpyruvyl shikimate-3-phosphate and inorganic phosphate. This Bacillus thuringiensis (strain Al Hakam) protein is 3-phosphoshikimate 1-carboxyvinyltransferase.